The following is a 159-amino-acid chain: Cyclic pyranopterin monophosphate synthase (159 aa).

Substrate contacts are provided by residues 75–77 and 113–114; these read LCH and ME. The active site involves D128.

This sequence belongs to the MoaC family. Homohexamer; trimer of dimers.

The catalysed reaction is (8S)-3',8-cyclo-7,8-dihydroguanosine 5'-triphosphate = cyclic pyranopterin phosphate + diphosphate. The protein operates within cofactor biosynthesis; molybdopterin biosynthesis. In terms of biological role, catalyzes the conversion of (8S)-3',8-cyclo-7,8-dihydroguanosine 5'-triphosphate to cyclic pyranopterin monophosphate (cPMP). The polypeptide is Cyclic pyranopterin monophosphate synthase (Heliobacterium modesticaldum (strain ATCC 51547 / Ice1)).